Consider the following 397-residue polypeptide: Acetate kinase 2 (397 aa).

N10 contacts Mg(2+). Residue K17 participates in ATP binding. R90 is a substrate binding site. Catalysis depends on D147, which acts as the Proton donor/acceptor. ATP is bound by residues 207 to 211, 281 to 283, and 329 to 333; these read HLGNG, DAR, and GIGEN. A Mg(2+)-binding site is contributed by E385.

The protein belongs to the acetokinase family. Homodimer. Mg(2+) serves as cofactor. It depends on Mn(2+) as a cofactor.

Its subcellular location is the cytoplasm. It catalyses the reaction acetate + ATP = acetyl phosphate + ADP. It functions in the pathway metabolic intermediate biosynthesis; acetyl-CoA biosynthesis; acetyl-CoA from acetate: step 1/2. In terms of biological role, catalyzes the formation of acetyl phosphate from acetate and ATP. Can also catalyze the reverse reaction. The protein is Acetate kinase 2 of Vibrio parahaemolyticus serotype O3:K6 (strain RIMD 2210633).